The following is a 147-amino-acid chain: Sulfur acceptor protein CsdE (147 aa).

Residue Cys61 is the Cysteine persulfide intermediate of the active site. Residue Cys61 is modified to Cysteine persulfide.

It belongs to the SufE family. As to quaternary structure, homodimer. Forms a heterodimer with CsdA. Interacts with CsdA and with TcdA/CsdL.

Its function is as follows. Stimulates the cysteine desulfurase activity of CsdA. Contains a cysteine residue (Cys-61) that acts to accept sulfur liberated via the desulfurase activity of CsdA. May be able to transfer sulfur to TcdA/CsdL. Seems to support the function of TcdA in the generation of cyclic threonylcarbamoyladenosine at position 37 (ct(6)A37) in tRNAs that read codons beginning with adenine. Does not appear to participate in Fe/S biogenesis. The polypeptide is Sulfur acceptor protein CsdE (csdE) (Escherichia coli (strain K12)).